Reading from the N-terminus, the 231-residue chain is Putative carboxymethylenebutenolidase (231 aa).

Residues Asp-169 and His-200 contribute to the active site.

The protein belongs to the dienelactone hydrolase family.

It carries out the reaction 2-(5-oxo-2,5-dihydrofuran-2-ylidene)acetate + H2O = 4-oxohex-2-enedioate + H(+). This is Putative carboxymethylenebutenolidase from Azospirillum brasilense.